Here is a 207-residue protein sequence, read N- to C-terminus: ATP-dependent Clp protease proteolytic subunit (207 aa).

Catalysis depends on serine 111, which acts as the Nucleophile. The active site involves histidine 136.

This sequence belongs to the peptidase S14 family. As to quaternary structure, fourteen ClpP subunits assemble into 2 heptameric rings which stack back to back to give a disk-like structure with a central cavity, resembling the structure of eukaryotic proteasomes.

The protein resides in the cytoplasm. The enzyme catalyses Hydrolysis of proteins to small peptides in the presence of ATP and magnesium. alpha-casein is the usual test substrate. In the absence of ATP, only oligopeptides shorter than five residues are hydrolyzed (such as succinyl-Leu-Tyr-|-NHMec, and Leu-Tyr-Leu-|-Tyr-Trp, in which cleavage of the -Tyr-|-Leu- and -Tyr-|-Trp bonds also occurs).. Functionally, cleaves peptides in various proteins in a process that requires ATP hydrolysis. Has a chymotrypsin-like activity. Plays a major role in the degradation of misfolded proteins. The sequence is that of ATP-dependent Clp protease proteolytic subunit from Aliivibrio salmonicida (strain LFI1238) (Vibrio salmonicida (strain LFI1238)).